Consider the following 203-residue polypeptide: Glycerol-3-phosphate acyltransferase (203 aa).

Transmembrane regions (helical) follow at residues 6-26 (LTLLMIVAAYLAGSVSSAVLV), 82-102 (AISLGLIAIAACLGHIYPVFF), 118-138 (APIGDDLAICLMASWVVLVLI), and 141-161 (YSSLAAIITALLAPLYTWWLD).

Belongs to the PlsY family. In terms of assembly, probably interacts with PlsX.

The protein resides in the cell inner membrane. It carries out the reaction an acyl phosphate + sn-glycerol 3-phosphate = a 1-acyl-sn-glycero-3-phosphate + phosphate. It functions in the pathway lipid metabolism; phospholipid metabolism. Its function is as follows. Catalyzes the transfer of an acyl group from acyl-phosphate (acyl-PO(4)) to glycerol-3-phosphate (G3P) to form lysophosphatidic acid (LPA). This enzyme utilizes acyl-phosphate as fatty acyl donor, but not acyl-CoA or acyl-ACP. The chain is Glycerol-3-phosphate acyltransferase from Shewanella oneidensis (strain ATCC 700550 / JCM 31522 / CIP 106686 / LMG 19005 / NCIMB 14063 / MR-1).